A 336-amino-acid polypeptide reads, in one-letter code: S-adenosylmethionine:tRNA ribosyltransferase-isomerase (336 aa).

The protein belongs to the QueA family. Monomer.

It is found in the cytoplasm. The enzyme catalyses 7-aminomethyl-7-carbaguanosine(34) in tRNA + S-adenosyl-L-methionine = epoxyqueuosine(34) in tRNA + adenine + L-methionine + 2 H(+). It participates in tRNA modification; tRNA-queuosine biosynthesis. Transfers and isomerizes the ribose moiety from AdoMet to the 7-aminomethyl group of 7-deazaguanine (preQ1-tRNA) to give epoxyqueuosine (oQ-tRNA). This chain is S-adenosylmethionine:tRNA ribosyltransferase-isomerase, found in Sulfurihydrogenibium sp. (strain YO3AOP1).